We begin with the raw amino-acid sequence, 82 residues long: Translation initiation factor IF-1, chloroplastic (82 aa).

An S1-like domain is found at 1-72; the sequence is MNKQNLIDVE…TKGRIIYRLR (72 aa).

It belongs to the IF-1 family. In terms of assembly, component of the 30S ribosomal translation pre-initiation complex which assembles on the 30S ribosome in the order IF-2 and IF-3, IF-1 and N-formylmethionyl-tRNA(fMet); mRNA recruitment can occur at any time during PIC assembly.

The protein localises to the plastid. It localises to the chloroplast. One of the essential components for the initiation of protein synthesis. Stabilizes the binding of IF-2 and IF-3 on the 30S subunit to which N-formylmethionyl-tRNA(fMet) subsequently binds. Helps modulate mRNA selection, yielding the 30S pre-initiation complex (PIC). Upon addition of the 50S ribosomal subunit IF-1, IF-2 and IF-3 are released leaving the mature 70S translation initiation complex. The protein is Translation initiation factor IF-1, chloroplastic of Cycas taitungensis (Prince sago).